The sequence spans 249 residues: Vesicle-associated membrane protein-associated protein A (249 aa).

Alanine 2 carries the N-acetylalanine modification. Topologically, residues 2-227 (ASASGAMAKH…VSFRDNVTSP (226 aa)) are cytoplasmic. One can recognise an MSP domain in the interval 14-131 (ILVLDPPSDL…MDSKLRCVFE (118 aa)). A phosphorylated FFAT motif binding region spans residues 50 to 53 (KVKT). N6-acetyllysine is present on lysine 125. A compositionally biased stretch (basic and acidic residues) spans 135–144 (ENDKLNDMEP). Residues 135-166 (ENDKLNDMEPSKAVPLNASKQDGPLPKPHSVS) form a disordered region. Residue serine 166 is modified to Phosphoserine. Positions 168-207 (NDTETRKLMEECKRLQGEMMKLSEENRHLRDEGLRLRKVA) form a coiled coil. A Phosphothreonine modification is found at threonine 170. Phosphoserine occurs at positions 214, 216, and 219. The helical; Anchor for type IV membrane protein transmembrane segment at 228–248 (LPSLLVVIAAIFIGFFLGKFI) threads the bilayer.

Belongs to the VAMP-associated protein (VAP) (TC 9.B.17) family. Homodimer; disulfide-linked. Heterodimer with VAPB. Interacts with VAMP1, VAMP2, STX1A, BET1, SEC22C and with the C-terminal domain of OCLN. Interacts (via MSP domain) with OSBPL1A (via FFAT motif). Interacts (via MSP domain) with ZFYVE27; may retain ZFYVE27 in the endoplasmic reticulum and regulate its function in cell projections formation. Interacts with OSBP. Interacts (via C-terminus) with RSAD2/viperin (via C-terminus). Interacts with IFITM3. Interacts with OSBPL3 (phosphorylated form). Interacts with KIF5A in a ZFYVE27-dependent manner. Interacts (via MSP domain) with STARD3 (via phosphorylated FFAT motif); this interaction recruits VAPA to the endosome. Interacts with STARD3NL (via FFAT motif). Interacts with CERT1. Interacts with PLEKHA3 and SACM1L to form a ternary complex. Interacts with VPS13A (via FFAT motif). Interacts with RB1CC1 (via phosphorylated FFAT motif), MIGA2 (via phosphorylated FFAT motif), RMDN3 (via phosphorylated FFAT motif), KCNB1 (via phosphorylated FFAT motif) and KCNB2 (via phosphorylated FFAT motif). Interacts (via MSP domain) with WDR44; the interactions connect the endoplasmic reticulum (ER) with the endosomal tubule. As to expression, ubiquitous.

It localises to the endoplasmic reticulum membrane. Its subcellular location is the cell membrane. It is found in the cell junction. The protein resides in the tight junction. The protein localises to the nucleus membrane. Its function is as follows. Endoplasmic reticulum (ER)-anchored protein that mediates the formation of contact sites between the ER and endosomes via interaction with FFAT motif-containing proteins such as STARD3 or WDR44. STARD3-VAPA interaction enables cholesterol transfer from the ER to endosomes. Via interaction with WDR44 participates in neosynthesized protein export. In addition, recruited to the plasma membrane through OSBPL3 binding. The OSBPL3-VAPA complex stimulates RRAS signaling which in turn attenuates integrin beta-1 (ITGB1) activation at the cell surface. With OSBPL3, may regulate ER morphology. May play a role in vesicle trafficking. In Rattus norvegicus (Rat), this protein is Vesicle-associated membrane protein-associated protein A.